Reading from the N-terminus, the 208-residue chain is Predicted GPI-anchored protein 37 (208 aa).

A signal peptide spans 1 to 18; that stretch reads MLFTQLIILLTVTSQALS. Positions 33–93 are disordered; it reads TKRLGGGSRG…SSSSSGSRNW (61 aa). The span at 36-53 shows a compositional bias: gly residues; that stretch reads LGGGSRGGSSSGSRGGSS. Residues 54 to 63 show a composition bias toward low complexity; the sequence is SGSSSGSSSG. An N-linked (GlcNAc...) asparagine glycan is attached at asparagine 173. Serine 185 carries GPI-anchor amidated serine lipidation. Residues 186–208 constitute a propeptide, removed in mature form; sequence SSLNIPSTHFYLIGFAAAYSIVL.

This sequence belongs to the PGA37 family.

Its subcellular location is the cell membrane. Its function is as follows. Predicted GPI-anchored protein which may have a role during host infection. The protein is Predicted GPI-anchored protein 37 (PGA37) of Candida albicans (strain SC5314 / ATCC MYA-2876) (Yeast).